The primary structure comprises 146 residues: Large ribosomal subunit protein uL15 (146 aa).

The tract at residues 1-56 is disordered; that stretch reads MGLRLNELSPGVGAKKTAQRRGRGIGSGLGKTGGRGVKGQKSRSGSSVRSGFEGGQ. The span at 24–37 shows a compositional bias: gly residues; it reads GIGSGLGKTGGRGV.

It belongs to the universal ribosomal protein uL15 family. In terms of assembly, part of the 50S ribosomal subunit.

Binds to the 23S rRNA. The protein is Large ribosomal subunit protein uL15 of Psychrobacter arcticus (strain DSM 17307 / VKM B-2377 / 273-4).